Consider the following 63-residue polypeptide: Large ribosomal subunit protein eL37 (63 aa).

The Zn(2+) site is built by Cys-20, Cys-23, Cys-35, and Cys-38. A C4-type zinc finger spans residues 20-38; the sequence is CRRCGHHSFNVRKGYCAHC.

It belongs to the eukaryotic ribosomal protein eL37 family. The cofactor is Zn(2+).

Binds to the 23S rRNA. The polypeptide is Large ribosomal subunit protein eL37 (Thermofilum pendens (strain DSM 2475 / Hrk 5)).